The chain runs to 88 residues: MRLILSLPVLAVVLAMVLEGPAPAQATTDVSSTSESILGKLKEFGSTVEEKVRTAIDQIKKSNVPEKTKNWFSEVFQKVKEKFETTFS.

A signal peptide spans 1–26 (MRLILSLPVLAVVLAMVLEGPAPAQA).

This sequence belongs to the apolipoprotein C1 family.

Its subcellular location is the secreted. Functionally, inhibitor of lipoprotein binding to the low density lipoprotein (LDL) receptor, LDL receptor-related protein, and very low density lipoprotein (VLDL) receptor. Associates with high density lipoproteins (HDL) and the triacylglycerol-rich lipoproteins in the plasma and makes up about 10% of the protein of the VLDL and 2% of that of HDL. Appears to interfere directly with fatty acid uptake and is also the major plasma inhibitor of cholesteryl ester transfer protein (CETP). Binds free fatty acids and reduces their intracellular esterification. Modulates the interaction of APOE with beta-migrating VLDL and inhibits binding of beta-VLDL to the LDL receptor-related protein. The protein is Apolipoprotein C-I (APOC1) of Eidolon helvum (Straw-colored fruit bat).